An 86-amino-acid polypeptide reads, in one-letter code: Small ribosomal subunit protein uS17 (86 aa).

This sequence belongs to the universal ribosomal protein uS17 family. As to quaternary structure, part of the 30S ribosomal subunit.

Functionally, one of the primary rRNA binding proteins, it binds specifically to the 5'-end of 16S ribosomal RNA. The protein is Small ribosomal subunit protein uS17 of Halorhodospira halophila (strain DSM 244 / SL1) (Ectothiorhodospira halophila (strain DSM 244 / SL1)).